The primary structure comprises 1322 residues: BRCA2-interacting transcriptional repressor EMSY (1322 aa).

Residues 1–478 are interaction with BRCA2; that stretch reads MPVVWPTLLD…LPKPVTATLP (478 aa). The ENT domain maps to 16–100; it reads CKRILRKLEL…EWSIEGRRLV (85 aa). An interaction with ZMYND11 region spans residues 104 to 108; that stretch reads PRLVP. Low complexity predominate over residues 148-162; the sequence is STTSTPTSTPVPSGS. 2 disordered regions span residues 148–178 and 192–215; these read STTSTPTSTPVPSGSIATVKSPRPASPASNV and VSCSDEDEKPRKRRRTNSSSSSPV. Thr-207 bears the Phosphothreonine mark. Phosphoserine is present on residues Ser-209 and Ser-213. Residues Ser-228 and Ser-236 are each glycosylated (O-linked (GlcNAc) serine). Ser-238 bears the Phosphoserine mark. Thr-271 carries O-linked (GlcNAc) threonine glycosylation. A compositionally biased stretch (low complexity) spans 417-437; it reads QQTQQQVAQPSPVSHQQQPQQ. The tract at residues 417-444 is disordered; the sequence is QQTQQQVAQPSPVSHQQQPQQSPLPPGI. 2 O-linked (GlcNAc) threonine glycosylation sites follow: Thr-501 and Thr-506. A glycan (O-linked (GlcNAc) serine) is linked at Ser-557. The span at 698 to 707 shows a compositional bias: polar residues; that stretch reads VAEAGNSSIQ. Residues 698–736 are disordered; sequence VAEAGNSSIQEGKEEPQNYTDSSSSSTESSQSSQDSQPV. Low complexity predominate over residues 717-734; that stretch reads TDSSSSSTESSQSSQDSQ. A phosphoserine mark is found at Ser-818 and Ser-821. Thr-1120 carries an O-linked (GlcNAc) threonine glycan. A Phosphoserine modification is found at Ser-1136. The span at 1205-1223 shows a compositional bias: polar residues; it reads QKCRESCSSPSTVGSSLTT. Disordered stretches follow at residues 1205–1231 and 1290–1322; these read QKCRESCSSPSTVGSSLTTRKIDPPAV and QLDDEETAMEQDIDSSTEDGTEPSPSQSSAERS. Over residues 1291 to 1310 the composition is skewed to acidic residues; sequence LDDEETAMEQDIDSSTEDGT. Residues 1312-1322 are compositionally biased toward polar residues; that stretch reads PSPSQSSAERS.

As to quaternary structure, homodimer. Interacts with the transactivation domain of BRCA2. Interacts with CBX1 (via chromoshadow domain). Interacts with ZMYND11. Does not interact with CBX3 or CBX5. Component of a nuclear receptor-mediated transcription complex composed of at least ZNF335, CCAR2 and EMSY; the complex stimulates the transcription of nuclear receptor target genes such as SOX9 and HOXA1. Within the complex interacts with CCAR2 and ZNF335. Components of this complex may associate with components of a histone methylation complex to form a complex at least composed of ZNF335, HCFC1, CCAR2, EMSY, MKI67, RBBP5, ASH2L and WDR5. Within this complex, interacts with ASH2L and RBBP5. O-glycosylated during cytokinesis at sites identical or close to phosphorylation sites, this interferes with the phosphorylation status.

The protein resides in the nucleus. In terms of biological role, regulator which is able to repress transcription, possibly via its interaction with a multiprotein chromatin remodeling complex that modifies the chromatin. Its interaction with BRCA2 suggests that it may play a central role in the DNA repair function of BRCA2. Mediates ligand-dependent transcriptional activation by nuclear hormone receptors. This chain is BRCA2-interacting transcriptional repressor EMSY, found in Homo sapiens (Human).